A 454-amino-acid polypeptide reads, in one-letter code: Golgi reassembly-stacking protein 2 (454 aa).

Glycine 2 is lipidated: N-myristoyl glycine. PDZ GRASP-type domains are found at residues 15–105 (EGYH…FCSF) and 111–199 (NVWH…YGYL). Positions 15–215 (EGYHVLRVQE…PFEEGKKISL (201 aa)) are GRASP. Dimethylated arginine occurs at positions 30 and 47. Positions 194-199 (IGYGYL) are important for membrane binding. Position 214 is a phosphoserine (serine 214). Residue threonine 222 is modified to Phosphothreonine. Phosphothreonine; by MAPK is present on threonine 225. Residues 377 to 454 (EGSSAASAGE…VTDANASGAS (78 aa)) form a disordered region. Position 411 is a phosphoserine (serine 411). Residue threonine 435 is modified to Phosphothreonine. Phosphoserine is present on residues serine 443 and serine 451.

It belongs to the GORASP family. In terms of assembly, homodimer. Homooligomer. ER stress induces phosphorylation-dependent monomerization. Interacts with BLZF1/Golgin 45. Identified in a complex with RAB2 and GORASP2. Interacts with JAM2 and JAM3. Interacts with members of the p24 cargo receptors. Interacts with CNIH1 and the cytoplasmic domain of transmembrane TGFA, prior its transit in the trans-Golgi. Interacts with KCTD5. Interacts with TMED2 and TMED3. Interacts with SEC16A in response to ER stress. Interacts (via PDZ GRASP-type 1 domain) with core-glycosylated CFTR in response to ER stress. Post-translationally, myristoylated. Myristoylation is essential for the Golgi targeting. In terms of processing, palmitoylated. Phosphorylated in mitotic cells. ER stress-induced phosphorylation at Ser-443 induces monomerization and subsequent relocalization from Golgi to ER which is essential for mediating unconventional (ER/Golgi-independent) trafficking of CFTR to the cell membrane. Detected in lung, brain, heart, liver and testis.

The protein resides in the golgi apparatus membrane. Its subcellular location is the endoplasmic reticulum membrane. It is found in the golgi apparatus. In terms of biological role, key structural protein of the Golgi apparatus. The membrane cisternae of the Golgi apparatus adhere to each other to form stacks, which are aligned side by side to form the Golgi ribbon. Acting in concert with GORASP1/GRASP65, is required for the formation and maintenance of the Golgi ribbon, and may be dispensable for the formation of stacks. However, other studies suggest that GORASP2 plays a role in the assembly and membrane stacking of the Golgi cisternae, and in the process by which Golgi stacks reform after breakdown during mitosis and meiosis. May regulate the intracellular transport and presentation of a defined set of transmembrane proteins, such as transmembrane TGFA. Required for normal acrosome formation during spermiogenesis and normal male fertility, probably by promoting colocalization of JAM2 and JAM3 at contact sites between germ cells and Sertoli cells. Mediates ER stress-induced unconventional (ER/Golgi-independent) trafficking of core-glycosylated CFTR to cell membrane. This Rattus norvegicus (Rat) protein is Golgi reassembly-stacking protein 2 (Gorasp2).